The following is a 492-amino-acid chain: Bifunctional purine biosynthesis protein PurH (492 aa).

The MGS-like domain occupies 1–144; that stretch reads MKKAILSVSN…KNYKHVTTIV (144 aa).

The protein belongs to the PurH family.

It carries out the reaction (6R)-10-formyltetrahydrofolate + 5-amino-1-(5-phospho-beta-D-ribosyl)imidazole-4-carboxamide = 5-formamido-1-(5-phospho-D-ribosyl)imidazole-4-carboxamide + (6S)-5,6,7,8-tetrahydrofolate. The catalysed reaction is IMP + H2O = 5-formamido-1-(5-phospho-D-ribosyl)imidazole-4-carboxamide. Its pathway is purine metabolism; IMP biosynthesis via de novo pathway; 5-formamido-1-(5-phospho-D-ribosyl)imidazole-4-carboxamide from 5-amino-1-(5-phospho-D-ribosyl)imidazole-4-carboxamide (10-formyl THF route): step 1/1. The protein operates within purine metabolism; IMP biosynthesis via de novo pathway; IMP from 5-formamido-1-(5-phospho-D-ribosyl)imidazole-4-carboxamide: step 1/1. The polypeptide is Bifunctional purine biosynthesis protein PurH (Staphylococcus aureus (strain MSSA476)).